Reading from the N-terminus, the 317-residue chain is tRNA dimethylallyltransferase (317 aa).

ATP is bound at residue 14-21 (GPTASGKT). 16–21 (TASGKT) is a binding site for substrate. Interaction with substrate tRNA stretches follow at residues 39 to 42 (DSAL), 163 to 167 (QRIQR), and 248 to 253 (RCVGYR).

It belongs to the IPP transferase family. In terms of assembly, monomer. The cofactor is Mg(2+).

It carries out the reaction adenosine(37) in tRNA + dimethylallyl diphosphate = N(6)-dimethylallyladenosine(37) in tRNA + diphosphate. Functionally, catalyzes the transfer of a dimethylallyl group onto the adenine at position 37 in tRNAs that read codons beginning with uridine, leading to the formation of N6-(dimethylallyl)adenosine (i(6)A). The sequence is that of tRNA dimethylallyltransferase from Paraburkholderia phymatum (strain DSM 17167 / CIP 108236 / LMG 21445 / STM815) (Burkholderia phymatum).